We begin with the raw amino-acid sequence, 166 residues long: Endoribonuclease YbeY (166 aa).

Zn(2+) contacts are provided by histidine 132, histidine 136, and histidine 142.

Belongs to the endoribonuclease YbeY family. It depends on Zn(2+) as a cofactor.

The protein resides in the cytoplasm. Functionally, single strand-specific metallo-endoribonuclease involved in late-stage 70S ribosome quality control and in maturation of the 3' terminus of the 16S rRNA. The sequence is that of Endoribonuclease YbeY from Clostridium botulinum (strain Kyoto / Type A2).